The chain runs to 73 residues: UPF0235 protein PERMA_1406 (73 aa).

The protein belongs to the UPF0235 family.

This Persephonella marina (strain DSM 14350 / EX-H1) protein is UPF0235 protein PERMA_1406.